The following is a 652-amino-acid chain: MKKRIKELTDLLNRYRYDYYTKDAPSVSDSDYDKLYRELVTLEQSYPEYVLQDSPTQQVGGTILKGFEKYRHQYPLFSLQDAFSREELDAFDKRVKAEFPNATYLAELKIDGLSISLSYENGFLQVGATRGDGNIGENITENIKKIKDIPYQLSEPLTITVRGEAYMSRQSFKAINEARQENGETEFANPRNAAAGTLRQLDTSVVAKRQLATFLYQEASPTARNQQNEVLAELADLGFSVNPYYQLTSSMDEIWDFIKTIEAKRDQLAYDIDGVVIKVNSLAMQEELGFTVKAPRWAIAYKFPAEEKEAEILSVDWTVGRTGVVTPTANLTPVQLAGTTVSRATLHNVDYIAEKDIRIGDTVIVYKAGDIIPAVLNVVMSKRNQQEVMLIPKLCPSCGSELVHFEDEVALRCINPLCPSLIQRSLEHFASRDAMNITGLGPAIVEKLFLAGFVHDVADIYQLTKEDFMQLDGIKEKSADKLLAAIEASKSNSAEKLLFGLGIRHIGSKVSRLILEVYGDISALLTAKEEEIARIDGLGSTIAQSLTQYFEQKTAAILVDELKTAGVNMHYSGQKVNSDAALFGLTVVLTGKLNQLNRNEAKDKLEALGAKVTGSVSKKTDLVIAGSDAGSKLEKAKSLGIRIEDEDWLRQL.

Residues 29 to 33 (DSDYD), 78 to 79 (SL), and Glu107 each bind NAD(+). Lys109 (N6-AMP-lysine intermediate) is an active-site residue. Residues Arg130, Glu164, Lys278, and Lys302 each contribute to the NAD(+) site. Zn(2+) is bound by residues Cys395, Cys398, Cys413, and Cys418. A BRCT domain is found at 577-652 (NSDAALFGLT…IEDEDWLRQL (76 aa)).

The protein belongs to the NAD-dependent DNA ligase family. LigA subfamily. Requires Mg(2+) as cofactor. The cofactor is Mn(2+).

The catalysed reaction is NAD(+) + (deoxyribonucleotide)n-3'-hydroxyl + 5'-phospho-(deoxyribonucleotide)m = (deoxyribonucleotide)n+m + AMP + beta-nicotinamide D-nucleotide.. In terms of biological role, DNA ligase that catalyzes the formation of phosphodiester linkages between 5'-phosphoryl and 3'-hydroxyl groups in double-stranded DNA using NAD as a coenzyme and as the energy source for the reaction. It is essential for DNA replication and repair of damaged DNA. The protein is DNA ligase of Streptococcus pyogenes serotype M1.